A 202-amino-acid polypeptide reads, in one-letter code: Urease accessory protein UreG (202 aa).

11–18 (GPVGSGKT) lines the GTP pocket.

This sequence belongs to the SIMIBI class G3E GTPase family. UreG subfamily. In terms of assembly, homodimer. UreD, UreF and UreG form a complex that acts as a GTP-hydrolysis-dependent molecular chaperone, activating the urease apoprotein by helping to assemble the nickel containing metallocenter of UreC. The UreE protein probably delivers the nickel.

It localises to the cytoplasm. Functionally, facilitates the functional incorporation of the urease nickel metallocenter. This process requires GTP hydrolysis, probably effectuated by UreG. This Prochlorococcus marinus (strain MIT 9313) protein is Urease accessory protein UreG.